The sequence spans 529 residues: Ribonuclease Y (529 aa).

The chain crosses the membrane as a helical span at residues 4–24 (GLIYISLEVIVACLISALAMY). Residues 216–297 (FTNRIALPCS…NRIEEVYHRV (82 aa)) enclose the KH domain. Positions 342–435 (ALQHSKEVAL…VCAADALSAG (94 aa)) constitute an HD domain.

It belongs to the RNase Y family.

It localises to the cell membrane. Its function is as follows. Endoribonuclease that initiates mRNA decay. This is Ribonuclease Y from Helicobacter acinonychis (strain Sheeba).